The sequence spans 961 residues: Leucine-rich repeat-containing protein egg-6 (961 aa).

The first 18 residues, 1–18 (MRWLTLIAVAHLIAFLSS), serve as a signal peptide directing secretion. Topologically, residues 19–854 (AEITCPRIPE…EQNERHRNIR (836 aa)) are extracellular. LRR repeat units lie at residues 60-78 (IDEL…SLPF), 79-101 (NGLR…AWRH), 103-124 (EATI…VFGN), 125-148 (LSTL…AFNG), 150-172 (SALT…SLDA), 174-197 (KASL…ILRN), 199-222 (ANLM…LMNL), 223-245 (PFLR…AFMN), 247-269 (PQLQ…RLQG), 270-294 (FKNL…DLPN), 305-316 (ITKIETLAFSNN), 317-339 (PNLQ…SFES), 340-363 (LDKL…MFDG), 364-387 (MKNL…SFAQ), 388-411 (LAHL…TFDK), 413-435 (SKLF…VFKK), and 437-455 (ISNI…SFNE). The chain crosses the membrane as a helical span at residues 855 to 875 (IITAIALAFVGAVTVVVIIFF). The Cytoplasmic portion of the chain corresponds to 876–961 (VNYTKKQRRL…PQAVSHRSRH (86 aa)). Residues 890 to 943 (VYRSSPSSSGSSGQNAANESGRSSAAPSPIRPPLMNIPKTPNNRTMESTFGQPQ) are disordered. Over residues 893-902 (SSPSSSGSSG) the composition is skewed to low complexity. The span at 928 to 943 (KTPNNRTMESTFGQPQ) shows a compositional bias: polar residues.

In L1 larvae, expressed in a subset of epithelial cells including epidermal, vulval and rectal cells and the excretory duct and pore. Also detected in some neurons. Absent from internal epithelia such as the gut and pharyngeal tubes.

The protein localises to the apical cell membrane. Its function is as follows. Required for apical extracellular matrix organization and epithelial junction maintenance. The polypeptide is Leucine-rich repeat-containing protein egg-6 (Caenorhabditis elegans).